Consider the following 101-residue polypeptide: Small ribosomal subunit protein bS18c (101 aa).

It belongs to the bacterial ribosomal protein bS18 family. Part of the 30S ribosomal subunit.

The protein localises to the plastid. It localises to the chloroplast. This Aethionema grandiflorum (Persian stone-cress) protein is Small ribosomal subunit protein bS18c.